The chain runs to 356 residues: sn-glycerol-3-phosphate import ATP-binding protein UgpC (356 aa).

The 232-residue stretch at 4–235 folds into the ABC transporter domain; it reads LKLQAVTKSW…PASLFVASFI (232 aa). Residue 37–44 participates in ATP binding; it reads GPSGCGKS.

It belongs to the ABC transporter superfamily. sn-glycerol-3-phosphate importer (TC 3.A.1.1.3) family. In terms of assembly, the complex is composed of two ATP-binding proteins (UgpC), two transmembrane proteins (UgpA and UgpE) and a solute-binding protein (UgpB).

It localises to the cell inner membrane. It carries out the reaction sn-glycerol 3-phosphate(out) + ATP + H2O = sn-glycerol 3-phosphate(in) + ADP + phosphate + H(+). Functionally, part of the ABC transporter complex UgpBAEC involved in sn-glycerol-3-phosphate (G3P) import. Responsible for energy coupling to the transport system. This is sn-glycerol-3-phosphate import ATP-binding protein UgpC from Escherichia coli O6:H1 (strain CFT073 / ATCC 700928 / UPEC).